Here is a 200-residue protein sequence, read N- to C-terminus: Inner membrane-spanning protein YciB (200 aa).

Transmembrane regions (helical) follow at residues 32 to 52 (FVATGAFMVAIVAAVIVSYVV), 56 to 76 (VPLMALVTAVIVLVFGGLTLV), 93 to 113 (LFAVTLYVGLMLGRSFIAILF), 126 to 146 (FLTIRWARFFLFMAVLNEVIW), and 153 to 173 (FWVAFKAFGVIPLTAVFAMTQ).

The protein belongs to the YciB family.

It localises to the cell inner membrane. Functionally, plays a role in cell envelope biogenesis, maintenance of cell envelope integrity and membrane homeostasis. In Afipia carboxidovorans (strain ATCC 49405 / DSM 1227 / KCTC 32145 / OM5) (Oligotropha carboxidovorans), this protein is Inner membrane-spanning protein YciB.